The primary structure comprises 1541 residues: Regulator of G-protein signaling loco (1541 aa).

The segment at 1–66 (MHHHHPPLPI…RRKKRANYNY (66 aa)) is disordered. The segment covering 11-36 (TGASGSTAVGTGAAAAEDASPAANSG) has biased composition (low complexity). Over residues 40 to 53 (ISTSTTPSGSNSQQ) the composition is skewed to polar residues. The PDZ domain occupies 71–148 (TVEVRRGYNG…SIRMQIAENY (78 aa)). The segment at 182 to 222 (AKLHRLRNSPQKKLNPPEAVEPHKSKSSPDHPTLKPVLEDP) is disordered. Basic and acidic residues predominate over residues 201-214 (VEPHKSKSSPDHPT). Positions 247–423 (AALECRVIVG…VVNLVRSMYT (177 aa)) constitute a PID domain. Disordered stretches follow at residues 449-473 (GAVAAAHSPQPSNHSEISTTTSNSD) and 708-761 (SEPD…ASMN). Composition is skewed to polar residues over residues 457-473 (PQPSNHSEISTTTSNSD) and 744-761 (EQQQLGQSSPVRRTASMN). An RGS domain is found at 827–943 (SFERMLQDAA…IRSDLYKSCV (117 aa)). The disordered stretch occupies residues 978 to 1004 (SASNAEDRRRKSLLPWHRKTRSKSRDR). Residues 987-999 (RKSLLPWHRKTRS) are compositionally biased toward basic residues. RBD domains lie at 1072–1142 (SLCR…IERR) and 1143–1213 (VAFK…IVMV). The segment at 1258 to 1327 (DAAASEKSRP…SEEAATTQAV (70 aa)) is disordered. Polar residues predominate over residues 1273 to 1285 (MKSNEAPSETSSL). A compositionally biased stretch (low complexity) spans 1312–1325 (TSSSQQSEEAATTQ). The 23-residue stretch at 1354–1376 (QDELLEGLKRAQLARLEDQRGTE) folds into the GoLoco domain. The disordered stretch occupies residues 1410–1513 (KVPATPTEIP…ASKPGTFASK (104 aa)). Over residues 1460–1469 (APPPLPPKPK) the composition is skewed to pro residues. Over residues 1483-1499 (PTGNYCNKYSPSKQVPT) the composition is skewed to polar residues.

In terms of assembly, interacts (via GoLoco and RGS domains) with Galphai (via GDP- or GTP-bound forms). Expressed in surface and longitudinal glial cells, gut and heart (at protein level).

It localises to the cytoplasm. The protein resides in the cell membrane. Its subcellular location is the apical cell membrane. Functionally, acts as a regulator of G protein signaling (RGS). Modulates G protein alpha subunits nucleotide exchange and hydrolysis activities by functioning either as a GTPase-activating protein (GAP), thereby driving G protein alpha subunits into their inactive GDP-bound form, or as a GDP-dissociation inhibitor (GDI). Confers GDI and GAP activities on G(i) alpha subunit Galphai. Confers GAP activity on G(o)-alpha subunit Galphao and G(i) alpha subunit Galphai. Involved in the dorsal-ventral axis formation of the egg. Acts as a G-protein signaling for glial cell differentiation during embryogenesis; Galphai, Galphao and the G-protein coupled receptor, moody, are required in the surface glia to achieve effective insulation of the nerve cord. May be essential for nurse cell dumping during oogenesis. Required in neuroblast asymmetrical cell division. Plays a role in stress resistance and life span control. The chain is Regulator of G-protein signaling loco (loco) from Drosophila melanogaster (Fruit fly).